Here is a 421-residue protein sequence, read N- to C-terminus: 3-phosphoshikimate 1-carboxyvinyltransferase (421 aa).

Residues lysine 19, serine 20, and arginine 24 each coordinate 3-phosphoshikimate. Residue lysine 19 coordinates phosphoenolpyruvate. Residues glycine 88 and arginine 116 each coordinate phosphoenolpyruvate. Serine 160, glutamine 162, aspartate 307, and lysine 334 together coordinate 3-phosphoshikimate. Phosphoenolpyruvate is bound at residue glutamine 162. Residue aspartate 307 is the Proton acceptor of the active site. Residues arginine 338 and arginine 380 each contribute to the phosphoenolpyruvate site.

The protein belongs to the EPSP synthase family. In terms of assembly, monomer.

It localises to the cytoplasm. The catalysed reaction is 3-phosphoshikimate + phosphoenolpyruvate = 5-O-(1-carboxyvinyl)-3-phosphoshikimate + phosphate. It functions in the pathway metabolic intermediate biosynthesis; chorismate biosynthesis; chorismate from D-erythrose 4-phosphate and phosphoenolpyruvate: step 6/7. Its function is as follows. Catalyzes the transfer of the enolpyruvyl moiety of phosphoenolpyruvate (PEP) to the 5-hydroxyl of shikimate-3-phosphate (S3P) to produce enolpyruvyl shikimate-3-phosphate and inorganic phosphate. The chain is 3-phosphoshikimate 1-carboxyvinyltransferase from Thermotoga neapolitana (strain ATCC 49049 / DSM 4359 / NBRC 107923 / NS-E).